The sequence spans 361 residues: tRNA-specific 2-thiouridylase MnmA (361 aa).

ATP-binding positions include 11-18 (GMSGGVDS) and methionine 37. The interaction with target base in tRNA stretch occupies residues 97–99 (NPD). Catalysis depends on cysteine 102, which acts as the Nucleophile. A disulfide bridge links cysteine 102 with cysteine 199. Glycine 126 contacts ATP. The segment at 149–151 (KDQ) is interaction with tRNA. Catalysis depends on cysteine 199, which acts as the Cysteine persulfide intermediate. The interval 311 to 312 (RY) is interaction with tRNA.

Belongs to the MnmA/TRMU family.

Its subcellular location is the cytoplasm. It carries out the reaction S-sulfanyl-L-cysteinyl-[protein] + uridine(34) in tRNA + AH2 + ATP = 2-thiouridine(34) in tRNA + L-cysteinyl-[protein] + A + AMP + diphosphate + H(+). In terms of biological role, catalyzes the 2-thiolation of uridine at the wobble position (U34) of tRNA, leading to the formation of s(2)U34. The chain is tRNA-specific 2-thiouridylase MnmA from Cupriavidus taiwanensis (strain DSM 17343 / BCRC 17206 / CCUG 44338 / CIP 107171 / LMG 19424 / R1) (Ralstonia taiwanensis (strain LMG 19424)).